The following is a 130-amino-acid chain: Small ribosomal subunit protein uS9 (130 aa).

This sequence belongs to the universal ribosomal protein uS9 family.

The sequence is that of Small ribosomal subunit protein uS9 from Haemophilus influenzae (strain 86-028NP).